The following is a 606-amino-acid chain: MGVNAVHWFRKGLRLHDNPALKECIQGADTIRCVYILDPWFAGSSNVGINRWRFLLQCLEDLDANLRKLNSRLFVIRGQPADVFPRLFKEWNITKLSIEYDSEPFGKERDAAIKKLATEAGVEVIVRISHTLYDLDKIIELNGGQPPLTYKRFQTLVSKMEPLEMPADTITSDVIGKCMTPLSDDHDEKYGVPSLEELGFDTDGLSSAVWPGGETEALTRLERHLERKAWVANFERPRMNANSLLASPTGLSPYLRFGCLSCRLFYFKLTDLYKKVKKNSSPPLSLYGQLLWREFFYTAATNNPRFDKMEGNPICVQIPWDKNPEALAKWAEGRTGFPWIDAIMTQLRQEGWIHHLARHAVACFLTRGDLWISWEEGMKVFEELLLDADWSINAGSWMWLSCSSFFQQFFHCYCPVGFGRRTDPNGDYIRRYLPVLRGFPAKYIYDPWNAPEGIQKVAKCLIGVNYPKPMVNHAEASRLNIERMKQIYQQLSRYRGLGLLASVPSNSNGNGGLMGYAPGENVPSCSSSGNGGLMGYAPGENVPSCSGGNCSQGSGILHYAHGDSQQTHSLKQGRSSAGTGLSSGKRPSQEEDAQSVGPKVQRQSSN.

Residues 3–132 form the Photolyase/cryptochrome alpha/beta domain; the sequence is VNAVHWFRKG…EVIVRISHTL (130 aa). Residue Lys11 forms a Glycyl lysine isopeptide (Lys-Gly) (interchain with G-Cter in ubiquitin) linkage. Residues 50–54 carry the LIR 1 motif; it reads NRWRF. Residue Ser71 is modified to Phosphoserine; by AMPK. Residues 82 to 87 carry the LIR 2 motif; sequence DVFPRL. Residue Lys107 forms a Glycyl lysine isopeptide (Lys-Gly) (interchain with G-Cter in ubiquitin) linkage. The LIR 3 signature appears at 151–156; the sequence is KRFQTL. Lys159 participates in a covalent cross-link: Glycyl lysine isopeptide (Lys-Gly) (interchain with G-Cter in ubiquitin). Ser247 is subject to Phosphoserine; by MAPK. Ser252 is a binding site for FAD. 2 consecutive short sequence motifs (LIR) follow at residues 255–260 and 271–276; these read LRFGCL and DLYKKV. Ser280 carries the post-translational modification Phosphoserine; by AMPK. The LIR 6 signature appears at 285-290; that stretch reads SLYGQL. Gln289 contacts FAD. Residue Lys329 forms a Glycyl lysine isopeptide (Lys-Gly) (interchain with G-Cter in ubiquitin) linkage. The LIR 7 motif lies at 335-339; that stretch reads TGFPW. His355 is an FAD binding site. The segment at 371-470 is required for inhibition of CLOCK-BMAL1-mediated transcription; the sequence is WISWEEGMKV…LIGVNYPKPM (100 aa). The LIR 8 signature appears at 379-384; sequence KVFEEL. An FAD-binding site is contributed by 387–389; that stretch reads DAD. 3 consecutive short sequence motifs (LIR) follow at residues 395 to 400, 411 to 416, and 430 to 435; these read GSWMWL, HCYCPV, and RRYLPV. Positions 471 to 493 are interaction with TIMELESS; that stretch reads VNHAEASRLNIERMKQIYQQLSR. Residue Lys485 forms a Glycyl lysine isopeptide (Lys-Gly) (interchain with G-Cter in ubiquitin) linkage. 2 short sequence motifs (LIR) span residues 486 to 491 and 492 to 497; these read QIYQQL and SRYRGL. A disordered region spans residues 559–606; it reads YAHGDSQQTHSLKQGRSSAGTGLSSGKRPSQEEDAQSVGPKVQRQSSN. Residues 563-586 are compositionally biased toward polar residues; sequence DSQQTHSLKQGRSSAGTGLSSGKR. Lys585 is covalently cross-linked (Glycyl lysine isopeptide (Lys-Gly) (interchain with G-Cter in ubiquitin)). A Phosphoserine modification is found at Ser588.

Belongs to the DNA photolyase class-1 family. As to quaternary structure, component of the circadian core oscillator, which includes the CRY proteins, CLOCK or NPAS2, BMAL1 or BMAL2, CSNK1D and/or CSNK1E, TIMELESS, and the PER proteins. Interacts directly with TIMELESS. Interacts directly with PER1 and PER2; interaction with PER2 inhibits its ubiquitination and vice versa. Interacts with PER3. Interacts with FBXL21. Interacts with FBXL3. Interacts with PPP5C (via TPR repeats). Interacts with CLOCK-BMAL1 independently of PER2 and DNA. Interacts with HDAC1, HDAC2 and SIN3B. Interacts with nuclear receptors AR, NR1D1, NR3C1/GR, RORA and RORC; the interaction with at least NR3C1/GR is ligand dependent. Interacts with PRKDC. Interacts with the G protein subunit alpha GNAS; the interaction may block GPCR-mediated regulation of cAMP concentrations. Interacts with PRMT5. Interacts with EZH2. Interacts with MYBBP1A, DOCK7, HNRNPU, RPL7A, RPL8 and RPS3. Interacts with MAP1LC3B. Interacts with CLOCK. Interacts with BMAL1. Interacts weakly with HDAC3; this interaction is enhanced in the presence of FBXL3. Interacts with TRIM28, KCTD5 and DDB1. Interacts with DTL. Interacts with DDB1-CUL4A complex. Interacts with FOXO1. Interacts with PSMD2 in a KDM8-dependent manner. Interacts with KDM8 in a FBXL3-dependent manner. Interacts with PPARA. Interacts with PPARG in a ligand-dependent manner. Interacts with PPARD (via domain NR LBD) in a ligand-dependent manner. Interacts with NR1I2 (via domain NR LBD) in a ligand-dependent manner. Interacts with NR1I3, VDR and HNF4A. It depends on FAD as a cofactor. Requires (6R)-5,10-methylene-5,6,7,8-tetrahydrofolate as cofactor. In terms of processing, phosphorylation on Ser-247 by MAPK is important for the inhibition of CLOCK-BMAL1-mediated transcriptional activity. Phosphorylation by CSNK1E requires interaction with PER1 or PER2. Phosphorylation at Ser-71 and Ser-280 by AMPK decreases protein stability. Phosphorylation at Ser-588 exhibits a robust circadian rhythm with a peak at CT8, increases protein stability, prevents SCF(FBXL3)-mediated degradation and is antagonized by interaction with PRKDC. Ubiquitinated by the SCF(FBXL3) and SCF(FBXL21) complexes, regulating the balance between degradation and stabilization. The SCF(FBXL3) complex is mainly nuclear and mediates ubiquitination and subsequent degradation of CRY1. In contrast, cytoplasmic SCF(FBXL21) complex-mediated ubiquitination leads to stabilize CRY1 and counteract the activity of the SCF(FBXL3) complex. The SCF(FBXL3) and SCF(FBXL21) complexes probably mediate ubiquitination at different Lys residues. Ubiquitination at Lys-11 and Lys-107 are specifically ubiquitinated by the SCF(FBXL21) complex but not by the SCF(FBXL3) complex. Ubiquitination may be inhibited by PER2. Deubiquitinated by USP7. Post-translationally, undergoes autophagy-mediated degradation in the liver in a time-dependent manner. Autophagic degradation of CRY1 (an inhibitor of gluconeogenesis) occurs during periods of reduced feeding allowing induction of gluconeogenesis and maintenance of blood glucose levels. Expressed in cones, amacrine cells, and retinal ganglion cells of the retina (at protein level). Expressed in all tissues examined including heart, brain, spleen, lung, liver, skeletal muscle, kidney and testis. Higher levels in brain, liver and testis. In the retina, highly expressed in the ganglion cell layer (GCL) and in the inner nuclear layer (INL). Evenly distributed in central and peripheral retina. In the brain, highly expressed in the suprachiasmatic nucleus (SCN). High levels in cerebral cortical layers particularly in the pyramidial cell layer of the hippocampus, the granular cell layer of the dentate gyrus (DG) and the pyramidal cell layer of the piriform cortex (PFC).

Its subcellular location is the cytoplasm. The protein localises to the nucleus. With respect to regulation, KL001 (N-[3-(9H-carbazol-9-yl)-2-hydroxypropyl]-N-(2-furanylmethyl)-methanesulfonamide) binds to CRY1 and stabilizes it by inhibiting FBXL3- and ubiquitin-dependent degradation of CRY1 resulting in lengthening of the circadian periods. KL001-mediated CRY1 stabilization can inhibit glucagon-induced gluconeogenesis in primary hepatocytes. Transcriptional repressor which forms a core component of the circadian clock. The circadian clock, an internal time-keeping system, regulates various physiological processes through the generation of approximately 24 hour circadian rhythms in gene expression, which are translated into rhythms in metabolism and behavior. It is derived from the Latin roots 'circa' (about) and 'diem' (day) and acts as an important regulator of a wide array of physiological functions including metabolism, sleep, body temperature, blood pressure, endocrine, immune, cardiovascular, and renal function. Consists of two major components: the central clock, residing in the suprachiasmatic nucleus (SCN) of the brain, and the peripheral clocks that are present in nearly every tissue and organ system. Both the central and peripheral clocks can be reset by environmental cues, also known as Zeitgebers (German for 'timegivers'). The predominant Zeitgeber for the central clock is light, which is sensed by retina and signals directly to the SCN. The central clock entrains the peripheral clocks through neuronal and hormonal signals, body temperature and feeding-related cues, aligning all clocks with the external light/dark cycle. Circadian rhythms allow an organism to achieve temporal homeostasis with its environment at the molecular level by regulating gene expression to create a peak of protein expression once every 24 hours to control when a particular physiological process is most active with respect to the solar day. Transcription and translation of core clock components (CLOCK, NPAS2, BMAL1, BMAL2, PER1, PER2, PER3, CRY1 and CRY2) plays a critical role in rhythm generation, whereas delays imposed by post-translational modifications (PTMs) are important for determining the period (tau) of the rhythms (tau refers to the period of a rhythm and is the length, in time, of one complete cycle). A diurnal rhythm is synchronized with the day/night cycle, while the ultradian and infradian rhythms have a period shorter and longer than 24 hours, respectively. Disruptions in the circadian rhythms contribute to the pathology of cardiovascular diseases, cancer, metabolic syndromes and aging. A transcription/translation feedback loop (TTFL) forms the core of the molecular circadian clock mechanism. Transcription factors, CLOCK or NPAS2 and BMAL1 or BMAL2, form the positive limb of the feedback loop, act in the form of a heterodimer and activate the transcription of core clock genes and clock-controlled genes (involved in key metabolic processes), harboring E-box elements (5'-CACGTG-3') within their promoters. The core clock genes: PER1/2/3 and CRY1/2 which are transcriptional repressors form the negative limb of the feedback loop and interact with the CLOCK|NPAS2-BMAL1|BMAL2 heterodimer inhibiting its activity and thereby negatively regulating their own expression. This heterodimer also activates nuclear receptors NR1D1/2 and RORA/B/G, which form a second feedback loop and which activate and repress BMAL1 transcription, respectively. CRY1 and CRY2 have redundant functions but also differential and selective contributions at least in defining the pace of the SCN circadian clock and its circadian transcriptional outputs. More potent transcriptional repressor in cerebellum and liver than CRY2, though more effective in lengthening the period of the SCN oscillator. On its side, CRY2 seems to play a critical role in tuning SCN circadian period by opposing the action of CRY1. With CRY2, is dispensable for circadian rhythm generation but necessary for the development of intercellular networks for rhythm synchrony. Capable of translocating circadian clock core proteins such as PER proteins to the nucleus. Interacts with CLOCK-BMAL1 independently of PER proteins and is found at CLOCK-BMAL1-bound sites, suggesting that CRY may act as a molecular gatekeeper to maintain CLOCK-BMAL1 in a poised and repressed state until the proper time for transcriptional activation. Represses the CLOCK-BMAL1 induced transcription of BHLHE40/DEC1, ATF4, MTA1, KLF10 and NAMPT. May repress circadian target genes expression in collaboration with HDAC1 and HDAC2 through histone deacetylation. Mediates the clock-control activation of ATR and modulates ATR-mediated DNA damage checkpoint. In liver, mediates circadian regulation of cAMP signaling and gluconeogenesis by binding to membrane-coupled G proteins and blocking glucagon-mediated increases in intracellular cAMP concentrations and CREB1 phosphorylation. Inhibits hepatic gluconeogenesis by decreasing nuclear FOXO1 levels that down-regulates gluconeogenic gene expression. Besides its role in the maintenance of the circadian clock, is also involved in the regulation of other processes. Represses glucocorticoid receptor NR3C1/GR-induced transcriptional activity by binding to glucocorticoid response elements (GREs). Plays a key role in glucose and lipid metabolism modulation, in part, through the transcriptional regulation of genes involved in these pathways, such as LEP or ACSL4. Represses PPARD and its target genes in the skeletal muscle and limits exercise capacity. Plays an essential role in the generation of circadian rhythms in the retina. Represses the transcriptional activity of NR1I2. The chain is Cryptochrome-1 (Cry1) from Mus musculus (Mouse).